Reading from the N-terminus, the 511-residue chain is Dopamine receptor 1 (511 aa).

The first 19 residues, 1–19, serve as a signal peptide directing secretion; the sequence is MYTPHPFGFLIILVPMTNA. Over 20-142 the chain is Extracellular; that stretch reads MRAIAAIAAG…EEPEPLSLVS (123 aa). 5 N-linked (GlcNAc...) asparagine glycosylation sites follow: Asn-53, Asn-63, Asn-74, Asn-117, and Asn-123. Residues 143–169 traverse the membrane as a helical segment; sequence IVVVGIFLSVLIFLSVAGNILVCLAIY. Residues 170–179 lie on the Cytoplasmic side of the membrane; the sequence is TERSLRRIGN. The chain crosses the membrane as a helical span at residues 180–206; the sequence is LFLASLAIADLFVASLVMTFAGVNDLL. The Extracellular portion of the chain corresponds to 207-216; it reads GYWIFGAQFC. A disulfide bridge links Cys-216 with Cys-302. The helical transmembrane segment at 217-239 threads the bilayer; the sequence is DTWVAFDVMCSTASILNLCAISM. The Cytoplasmic segment spans residues 240–258; that stretch reads DRYIHIKDPLRYGRWVTRR. A helical membrane pass occupies residues 259-279; it reads VAVITIAAIWLLAAFVSFVPI. At 280 to 310 the chain is on the extracellular side; that stretch reads SLGIHRPDQPLIFEDNGKKYPTCALDLTPTY. Residues 311–331 form a helical membrane-spanning segment; sequence AVVSSCISFYFPCVVMIGIYC. At 332–391 the chain is on the cytoplasmic side; sequence RLYCYAQKHVKSIKAVTRPGEVAEKQRYKSIRRPKNQPKKFKVRNLHTHSSPYHVSDHKA. The chain crosses the membrane as a helical span at residues 392–412; that stretch reads AVTVGVIMGVFLICWVPFFCV. The Extracellular portion of the chain corresponds to 413–427; it reads NITAAFCKTCIGGQT. The helical transmembrane segment at 428-450 threads the bilayer; it reads FKILTWLGYSNSAFNPIIYSIFN. The Cytoplasmic portion of the chain corresponds to 451 to 511; sequence KEFRDAFKRI…SAELEQVSAI (61 aa). Residues Cys-468 and Cys-469 are each lipidated (S-palmitoyl cysteine).

The protein belongs to the G-protein coupled receptor 1 family. As to expression, expressed in the larval and adult CNS in structures that mediate higher-order brain functions such as learning, memory and motor control: in the mushroom body neuropil and four unpaired neurons in each thoracic segment. The adult CNS has intense expression in the central complex, moderate expression in several neurosecretory cells, and weak expression in two unpaired neurons in the mesothoracic neuromere. Also seen in the somata of the optic lobes.

Its subcellular location is the cell membrane. Functionally, receptor for dopamine. The activity of this receptor is mediated by G proteins which activate adenylyl cyclase. Might be involved in the processing of visual information and/or visual learning. Important for Pavlovian conditioning: required in the mushroom body as a receptor conveying unconditional stimuli information, has a role in memory formation for aversive and appetitive learning. Sleep-deprivation-induced impairments in learning can be partially explained through alterations in dopamine signaling, Dop1R1 expression levels are reduced; sleep may have a role in restoring dopamine homeostasis. This is Dopamine receptor 1 (Dop1R1) from Drosophila melanogaster (Fruit fly).